The primary structure comprises 422 residues: Glutamyl-tRNA reductase (422 aa).

Substrate-binding positions include 49 to 52, serine 107, 112 to 114, and glutamine 118; these read TCNR and EPQ. The active-site Nucleophile is cysteine 50. 187-192 provides a ligand contact to NADP(+); that stretch reads GAGETI.

This sequence belongs to the glutamyl-tRNA reductase family. In terms of assembly, homodimer.

The enzyme catalyses (S)-4-amino-5-oxopentanoate + tRNA(Glu) + NADP(+) = L-glutamyl-tRNA(Glu) + NADPH + H(+). It functions in the pathway porphyrin-containing compound metabolism; protoporphyrin-IX biosynthesis; 5-aminolevulinate from L-glutamyl-tRNA(Glu): step 1/2. Functionally, catalyzes the NADPH-dependent reduction of glutamyl-tRNA(Glu) to glutamate 1-semialdehyde (GSA). The protein is Glutamyl-tRNA reductase of Stutzerimonas stutzeri (strain A1501) (Pseudomonas stutzeri).